The primary structure comprises 1288 residues: VWFA and cache domain-containing protein 1 (1288 aa).

Residues 1-49 (MAREPEEEETVRPAAVVRRCPRCPGWPGAPRPPLWLLCLVACWILGAVA) form the signal peptide. Residues 50 to 1109 (DADFSILDEA…ITLNMIKSAP (1060 aa)) lie on the Extracellular side of the membrane. N-linked (GlcNAc...) asparagine glycosylation is present at Asn159. Positions 242–457 (HIVVILDHGA…TTVGRFYTNL (216 aa)) constitute a VWFA domain. 2 Cache domains span residues 467 to 546 (FSLP…SEPP) and 786 to 867 (LTGP…HPTL). Residues 1110–1130 (VGPVAGGIMGCIMVLVLAVYA) form a helical membrane-spanning segment. Residues 1131–1288 (YRHQIHRRSH…VTVHTVDAEC (158 aa)) are Cytoplasmic-facing. Disordered regions lie at residues 1157 to 1176 (NLENDRDERDDDSHEDRGII) and 1187 to 1237 (ERHV…VDVG). Residues 1159–1174 (ENDRDERDDDSHEDRG) are compositionally biased toward basic and acidic residues. Residues 1210–1229 (GYSTMSPQEDSENPPCNNDP) show a composition bias toward polar residues.

The protein belongs to the calcium channel subunit alpha-2/delta family.

Its subcellular location is the membrane. Functionally, may regulate voltage-dependent calcium channels. The protein is VWFA and cache domain-containing protein 1 (Cachd1) of Mus musculus (Mouse).